Here is a 316-residue protein sequence, read N- to C-terminus: Phospholipase A1 3 (316 aa).

A signal peptide spans 1–4; the sequence is ADDL. Positions 5–14 are excised as a propeptide; that stretch reads TTLRNGTLDR. C20 and C103 are joined by a disulfide. The active-site Nucleophile is S153. D181 functions as the Charge relay system in the catalytic mechanism. Cystine bridges form between C192-C197 and C235-C240. The active-site Charge relay system is H242. Intrachain disulfides connect C257–C284, C258–C309, and C277–C282.

Belongs to the AB hydrolase superfamily. Lipase family. As to expression, expressed by the venom gland.

Its subcellular location is the secreted. The enzyme catalyses a 1,2-diacyl-sn-glycero-3-phosphocholine + H2O = a 2-acyl-sn-glycero-3-phosphocholine + a fatty acid + H(+). In terms of biological role, catalyzes the hydrolysis of phosphatidylcholine with phospholipase A1 activity. May act as an allergen and induce hemolytic activity. This chain is Phospholipase A1 3, found in Polistes dominula (European paper wasp).